Reading from the N-terminus, the 339-residue chain is Replication factor C subunit 2 (339 aa).

48–55 (YGPPGTGK) lines the ATP pocket.

Belongs to the activator 1 small subunits family. In terms of assembly, heterotetramer of subunits RFC2, RFC3, RFC4 and RFC5 that can form a complex with RFC1. In terms of tissue distribution, expressed in roots, leaves, shoot apical meristem (SAM), flag leaves and panicles.

It is found in the nucleus. May be involved in DNA replication and thus regulate cell proliferation. The sequence is that of Replication factor C subunit 2 (RFC2) from Oryza sativa subsp. japonica (Rice).